The primary structure comprises 281 residues: Proteasome subunit beta (281 aa).

The propeptide at M1–G53 is removed in mature form; by autocatalysis. T54 functions as the Nucleophile in the catalytic mechanism.

This sequence belongs to the peptidase T1B family. As to quaternary structure, the 20S proteasome core is composed of 14 alpha and 14 beta subunits that assemble into four stacked heptameric rings, resulting in a barrel-shaped structure. The two inner rings, each composed of seven catalytic beta subunits, are sandwiched by two outer rings, each composed of seven alpha subunits. The catalytic chamber with the active sites is on the inside of the barrel. Has probably a gated structure, the ends of the cylinder being occluded by the N-termini of the alpha-subunits. Is likely capped by the proteasome-associated ATPase, ARC.

It is found in the cytoplasm. It carries out the reaction Cleavage of peptide bonds with very broad specificity.. It functions in the pathway protein degradation; proteasomal Pup-dependent pathway. With respect to regulation, the formation of the proteasomal ATPase ARC-20S proteasome complex, likely via the docking of the C-termini of ARC into the intersubunit pockets in the alpha-rings, may trigger opening of the gate for substrate entry. Interconversion between the open-gate and close-gate conformations leads to a dynamic regulation of the 20S proteasome proteolysis activity. Peptidolytic activity is completely inhibited by lactacystin, and to a lesser extent, by N-acetyl-Leu-Leu-norleucinal (Ac-LLnL) and benzoyloxycarbonyl-Leu-Leu-Leu-vinylsulfone (Z-LLL-VS) in vitro. In terms of biological role, component of the proteasome core, a large protease complex with broad specificity involved in protein degradation. The S.coelicolor proteasome is able to cleave oligopeptides after hydrophobic residues, but not after basic or acidic residues, thus displaying chymotrypsin-like activity but not trypsin-like activity. This chain is Proteasome subunit beta, found in Streptomyces coelicolor (strain ATCC BAA-471 / A3(2) / M145).